The chain runs to 509 residues: Cytochrome P450 monooxygenase traB (509 aa).

The chain crosses the membrane as a helical span at residues 8–28 (LVELVSITGGLIVLFIAYTGF). Cys453 is a heme binding site.

Belongs to the cytochrome P450 family. It depends on heme as a cofactor.

It is found in the membrane. The protein operates within secondary metabolite biosynthesis. Functionally, cytochrome P450 monooxygenase; part of the tra gene cluster that produces terrestric acid. The clavatol biosynthesis cluster cla and the terrestric acid cluster tra are both involved in the production of peniphenones and penilactones. The non-reducing PKS claF is responsible for the formation of clavatol from successive condensations of 3 malonyl-CoA units, presumably with a simple acetyl-CoA starter unit, and 2 methylation steps. The esterase claE probably collaborates with claF by catalyzing the hydrolysis of ACP-bound acyl intermediates to free the ACP from stalled intermediates. The clavatol oxidase claD then converts clavatol to hydroxyclavatol. Spontaneous dehydration of hydroxyclavatol leads to the accumulation of the highly active ortho-quinone methide. On the other hand, the PKS-NRPS hybrid traA is involved in the formation of crustosic acid, with the help of traB and traD. The polyketide synthase module (PKS) of traA is responsible for the synthesis of the polyketide backbone via the condensation of an acetyl-CoA starter unit with 3 malonyl-CoA units. The downstream nonribosomal peptide synthetase (NRPS) module then amidates the carboxyl end of the polyketide with L-malic acid. Because traA lacks a designated enoylreductase (ER) domain, the required activity is provided the enoyl reductase traG. Crustosic acid undergoes decarboxylation and isomerization to the terrestric acid, catalyzed by the 2-oxoglutarate-dependent dioxygenase traH. Both acids are further converted to the 2 gamma-butyrolactones (R)-5-methyltetronic acid and (S)-5-carboxylmethyltetronic acid, with involvement of the cytochrome P450 monooxygenase claJ. Spontaneous addition of the methide to these gamma-butyrolactones leads to peniphenone D and penilactone D, which undergo again stereospecific attacking by methide to give penilactones A and B. In Penicillium crustosum (Blue mold fungus), this protein is Cytochrome P450 monooxygenase traB.